A 124-amino-acid chain; its full sequence is UPF0102 protein tll1737 (124 aa).

Belongs to the UPF0102 family.

The polypeptide is UPF0102 protein tll1737 (Thermosynechococcus vestitus (strain NIES-2133 / IAM M-273 / BP-1)).